The sequence spans 98 residues: MTLFSSISSMSTSMSGSKSSIASFGSGTSMGSNSIACGGGCGGSGGILGSGLGLGLGLDLTGGSRSRGACGNGGNRGNGNGGMGGGNGSCCGGPCCGI.

Residues 1 to 21 (MTLFSSISSMSTSMSGSKSSI) are disordered.

This sequence belongs to the hssA/B family.

The sequence is that of HssA/B-like protein 39 (hssl39) from Dictyostelium discoideum (Social amoeba).